Here is a 509-residue protein sequence, read N- to C-terminus: Activin receptor type-1 (509 aa).

An N-terminal signal peptide occupies residues 1-20; that stretch reads MVDGAMILSVLMMMALPSPS. The Extracellular segment spans residues 21-123; that stretch reads MEDEEPKVNP…FPGSQNFHLE (103 aa). Asn-102 is a glycosylation site (N-linked (GlcNAc...) asparagine). A helical membrane pass occupies residues 124–146; it reads VGLIILSVVFAVCLFACILGVAL. At 147–509 the chain is on the cytoplasmic side; it reads RKFKRRNQER…NSLDKLKTDC (363 aa). The region spanning 178 to 207 is the GS domain; sequence STLAELLDHSCTSGSGSGLPFLVQRTVARQ. Residues 208–502 enclose the Protein kinase domain; sequence ITLLECVGKG…KTLTKIDNSL (295 aa). ATP-binding positions include 214-222 and Lys-235; that span reads VGKGRYGEV. Residue Asp-336 is the Proton acceptor of the active site. Ser-501 is subject to Phosphoserine.

The protein belongs to the protein kinase superfamily. TKL Ser/Thr protein kinase family. TGFB receptor subfamily. In terms of assembly, interacts with FKBP1A. Interacts with FCHO1. Interacts with CLU. Interacts with type II receptors AMHR2 and ACVR2A. Interacts with BMP7. Interacts with GDF2/BMP9. Interacts with BMP6 (when glycosylated); the interaction may induce HAMP expression. Interacts with TSC22D1/TSC-22. Mg(2+) serves as cofactor. The cofactor is Mn(2+). Urogenital ridge, testis, ovary, brain and lungs.

It localises to the membrane. It catalyses the reaction L-threonyl-[receptor-protein] + ATP = O-phospho-L-threonyl-[receptor-protein] + ADP + H(+). The catalysed reaction is L-seryl-[receptor-protein] + ATP = O-phospho-L-seryl-[receptor-protein] + ADP + H(+). Functionally, bone morphogenetic protein (BMP) type I receptor that is involved in a wide variety of biological processes, including bone, heart, cartilage, nervous, and reproductive system development and regulation. As a type I receptor, forms heterotetrameric receptor complexes with the type II receptors AMHR2, ACVR2A ors ACVR2B. Upon binding of ligands such as BMP7 or GDF2/BMP9 to the heteromeric complexes, type II receptors transphosphorylate ACVR1 intracellular domain. In turn, ACVR1 kinase domain is activated and subsequently phosphorylates SMAD1/5/8 proteins that transduce the signal. In addition to its role in mediating BMP pathway-specific signaling, suppresses TGFbeta/activin pathway signaling by interfering with the binding of activin to its type II receptor. Besides canonical SMAD signaling, can activate non-canonical pathways such as p38 mitogen-activated protein kinases/MAPKs. May promote the expression of HAMP, potentially via its interaction with BMP6. The sequence is that of Activin receptor type-1 (Acvr1) from Rattus norvegicus (Rat).